Reading from the N-terminus, the 1016-residue chain is KN motif and ankyrin repeat domain-containing protein 4 (1016 aa).

Disordered stretches follow at residues 1 to 26, 70 to 91, 235 to 259, 401 to 485, 506 to 563, and 622 to 755; these read MEKIDGKDQSSQGDEEKEPPKSYPYS, PRNFSLPNSGDRTYAVPPQQNW, AEPEEGDLKASSHLSQPGPSSAVQS, LSQE…LPRG, EEGS…SPQD, and AQAP…VSHL. Polar residues-rich tracts occupy residues 70–80 and 246–258; these read PRNFSLPNSGD and SHLSQPGPSSAVQ. Positions 346–409 form a coiled coil; that stretch reads SSLKNQVLAL…KLSQERASEA (64 aa). Composition is skewed to basic and acidic residues over residues 401 to 414 and 445 to 454; these read LSQERASEAPDRTD and PECRAPRAEK. Positions 460–469 are enriched in polar residues; the sequence is VQNNHKQSYP. Residues 632-650 are compositionally biased toward pro residues; the sequence is TPAPPPSTPPPPPPPPPEI. Thr639 bears the Phosphothreonine mark. The segment covering 695–708 has biased composition (acidic residues); the sequence is TSGEDSSPEDLSDS. Basic and acidic residues-rich tracts occupy residues 709 to 727 and 745 to 755; these read ETEKKQDCSESREDRDLHP and TSDRGEEVSHL. ANK repeat units lie at residues 838–868, 877–905, 910–939, 943–973, and 977–1007; these read SGNTALHYSVSHSNFAIVKLLLDTGVCNVDH, VMITPLASAETKEDMAVVWKLLREGNVNI, GGQTALMLGVSHDREDMVQALLSCQADVNL, DGSSALMLACHQGNADLVRLLLAHPACNSSL, and AGRTALSLVLNSPAHVEIAELLRAHSEPGRS.

The protein localises to the cytoplasm. Functionally, may be involved in the control of cytoskeleton formation by regulating actin polymerization. The chain is KN motif and ankyrin repeat domain-containing protein 4 (Kank4) from Mus musculus (Mouse).